The following is a 203-amino-acid chain: FMN-dependent NADH:quinone oxidoreductase (203 aa).

Residues Ser-9, 15-17, and 139-142 contribute to the FMN site; these read SVS and TRGG.

It belongs to the azoreductase type 1 family. Homodimer. The cofactor is FMN.

The catalysed reaction is 2 a quinone + NADH + H(+) = 2 a 1,4-benzosemiquinone + NAD(+). The enzyme catalyses N,N-dimethyl-1,4-phenylenediamine + anthranilate + 2 NAD(+) = 2-(4-dimethylaminophenyl)diazenylbenzoate + 2 NADH + 2 H(+). Functionally, quinone reductase that provides resistance to thiol-specific stress caused by electrophilic quinones. Also exhibits azoreductase activity. Catalyzes the reductive cleavage of the azo bond in aromatic azo compounds to the corresponding amines. The protein is FMN-dependent NADH:quinone oxidoreductase of Albidiferax ferrireducens (strain ATCC BAA-621 / DSM 15236 / T118) (Rhodoferax ferrireducens).